Consider the following 370-residue polypeptide: Lysophosphatidic acid receptor 4 (370 aa).

The Extracellular portion of the chain corresponds to 1–43 (MGDRRFIDFQFQDSNSSLRPRLGNATANNTCIVDDSFKYNLNG). 3 N-linked (GlcNAc...) asparagine glycosylation sites follow: Asn-15, Asn-24, and Asn-28. The chain crosses the membrane as a helical span at residues 44 to 64 (AVYSVVFILGLITNSVSLFVF). The Cytoplasmic segment spans residues 65–73 (CFRMKMRSE). The chain crosses the membrane as a helical span at residues 74–94 (TAIFITNLAVSDLLFVCTLPF). The Extracellular portion of the chain corresponds to 95–112 (KIFYNFNRHWPFGDTLCK). A disulfide bond links Cys-111 and Cys-188. The helical transmembrane segment at 113–133 (ISGTAFLTNIYGSMLFLTCIS) threads the bilayer. Residues 134–155 (VDRFLAIVYPFRSRTIRTRRNS) lie on the Cytoplasmic side of the membrane. The chain crosses the membrane as a helical span at residues 156-176 (AIVCAGVWILVLSGGISASLF). Topologically, residues 177–203 (STTNVNNATTTCFEGFSKRVWKTYLSK) are extracellular. Asn-183 carries an N-linked (GlcNAc...) asparagine glycan. A helical transmembrane segment spans residues 204–224 (ITIFIEVVGFIIPLILNVSCS). At 225-254 (SVVLRTLRKPATLSQIGTNKKKVLKMITVH) the chain is on the cytoplasmic side. Residues 255–275 (MAVFVVCFVPYNSVLFLYALV) traverse the membrane as a helical segment. At 276 to 294 (RSQAITNCFLERFAKIMYP) the chain is on the extracellular side. The chain crosses the membrane as a helical span at residues 295–315 (ITLCLATLNCCFDPFIYYFTL). Residues 316–370 (ESFQKSFYINAHIRMESLFKTETPLTTKPSLPAIQEEVSDQTTNNGGELMLESTF) lie on the Cytoplasmic side of the membrane.

Belongs to the G-protein coupled receptor 1 family. As to expression, high expression in ovary. Not detected in the brain regions thalamus, putamen, caudate, frontal cortex, pons, hypothalamus and hippocampus.

Its subcellular location is the cell membrane. In terms of biological role, receptor for lysophosphatidic acid (LPA), a mediator of diverse cellular activities. Transduces a signal by increasing the intracellular calcium ions and by stimulating adenylyl cyclase activity. The rank order of potency for agonists of this receptor is 1-oleoyl- &gt; 1-stearoyl- &gt; 1-palmitoyl- &gt; 1-myristoyl- &gt; 1-alkyl- &gt; 1-alkenyl-LPA. The sequence is that of Lysophosphatidic acid receptor 4 (LPAR4) from Homo sapiens (Human).